The primary structure comprises 259 residues: Pycsar effector protein RsmPycTIR (259 aa).

1 to 120 (MVGGDEVIAN…RRVHEDFSGR (120 aa)) contacts a nucleoside 3',5'-cyclic phosphate. The tract at residues 126-229 (LATGISRRTS…AEFQYQISSS (104 aa)) is TIR-like. The next 3 membrane-spanning stretches (helical) occupy residues 136–156 (GWNW…AIWY), 169–189 (VLLP…ADPV), and 234–254 (QATA…LFWI).

It is found in the cell inner membrane. The enzyme catalyses NAD(+) + H2O = ADP-D-ribose + nicotinamide + H(+). Functionally, pycsar (pyrimidine cyclase system for antiphage resistance) provides immunity against bacteriophage. The pyrimidine cyclase (PycC) synthesizes cyclic nucleotides in response to infection; these serve as specific second messenger signals. The signals activate the adjacent effector, leading to bacterial cell death and abortive phage infection. A clade B Pycsar system. The effector gene of a two-gene Pycsar system. Expression of this and adjacent uridylate cyclase RsmPycC (AC A0A1V0HUX5) probably confers resistance to bacteriophage. The genes are probably only expressed in response to bacteriophage infection. Probably only responds to cUMP (produced by its cognate NTP cyclase), it may act by degrading NAD(+) and/or by impairing membrane integrity. The protein is Pycsar effector protein RsmPycTIR of Rhodovulum sp. (strain MB263).